A 413-amino-acid polypeptide reads, in one-letter code: CinA-like protein (413 aa).

This sequence belongs to the CinA family.

This chain is CinA-like protein, found in Desulfosudis oleivorans (strain DSM 6200 / JCM 39069 / Hxd3) (Desulfococcus oleovorans).